The following is a 527-amino-acid chain: Cyclin-L1 (527 aa).

Positions 1 to 37 are disordered; sequence MASGPHPTSTAAAASASSAAPSAGGSSSGTTTTTTTT. 2 cyclin-like regions span residues 89–191 and 204–288; these read ELIQ…RVLK and KIIV…ETLR. Residue T326 is modified to Phosphothreonine. A disordered region spans residues 327–527; that stretch reads PALSTLGGFS…SRSGHGRHRR (201 aa). 2 positions are modified to phosphoserine: S336 and S339. Glycyl lysine isopeptide (Lys-Gly) (interchain with G-Cter in SUMO2) cross-links involve residues K340 and K348. A compositionally biased stretch (basic and acidic residues) spans 343-353; it reads SPREVKAEEKS. 2 positions are modified to phosphoserine: S353 and S356. Over residues 362-371 the composition is skewed to basic and acidic residues; that stretch reads VKKEPEDRQQ. K363 is covalently cross-linked (Glycyl lysine isopeptide (Lys-Gly) (interchain with G-Cter in SUMO2)). S375 bears the Phosphoserine mark. 4 stretches are compositionally biased toward basic residues: residues 383-419, 439-453, 461-477, and 487-499; these read DSKRSRNSRSASRSRSRTRSRSRSHTPRRHYNNRRSR, RRHHNHGSPHLKAKH, SNRHGHKRKKSRSRSQS, and KKHRHERGHHRDR. The segment at 391–433 is RS; sequence RSASRSRSRTRSRSRSHTPRRHYNNRRSRSGTYSSRSRSRSRS. A Phosphoserine modification is found at S446. Over residues 500-509 the composition is skewed to basic and acidic residues; the sequence is RERSRSFERS. The span at 510 to 527 shows a compositional bias: basic residues; it reads HKGKHHGGSRSGHGRHRR.

The protein belongs to the cyclin family. Cyclin L subfamily. Interacts with POLR2A via its hyperphosphorylated C-terminal domain (CTD). Interacts with CDK11A, CDK11B, CDK12 and CDK13. May form a ternary complex with CDK11B and casein kinase II (CKII). Interacts with pre-mRNA-splicing factors, including at least SRSF1, SRSF2 AND SRSF7/SLU7. As to expression, ubiquitous with higher level in liver; expressed in striatal neurons.

It is found in the nucleus speckle. The protein resides in the nucleus. The protein localises to the nucleoplasm. Involved in pre-mRNA splicing. Functions in association with cyclin-dependent kinases (CDKs). May play a role in the regulation of RNA polymerase II (pol II). Inhibited by the CDK-specific inhibitor CDKN1A/p21. The sequence is that of Cyclin-L1 (Ccnl1) from Rattus norvegicus (Rat).